A 276-amino-acid chain; its full sequence is Formamidopyrimidine-DNA glycosylase (276 aa).

P2 acts as the Schiff-base intermediate with DNA in catalysis. E3 acts as the Proton donor in catalysis. K58 (proton donor; for beta-elimination activity) is an active-site residue. 3 residues coordinate DNA: H94, R112, and R157. The FPG-type zinc finger occupies 242-276 (FVYDRAGLPCRVCGTPIKQIVQGQRSTYFCPTCQR). R266 (proton donor; for delta-elimination activity) is an active-site residue.

This sequence belongs to the FPG family. In terms of assembly, monomer. The cofactor is Zn(2+).

The enzyme catalyses Hydrolysis of DNA containing ring-opened 7-methylguanine residues, releasing 2,6-diamino-4-hydroxy-5-(N-methyl)formamidopyrimidine.. It catalyses the reaction 2'-deoxyribonucleotide-(2'-deoxyribose 5'-phosphate)-2'-deoxyribonucleotide-DNA = a 3'-end 2'-deoxyribonucleotide-(2,3-dehydro-2,3-deoxyribose 5'-phosphate)-DNA + a 5'-end 5'-phospho-2'-deoxyribonucleoside-DNA + H(+). Involved in base excision repair of DNA damaged by oxidation or by mutagenic agents. Acts as a DNA glycosylase that recognizes and removes damaged bases. Has a preference for oxidized purines, such as 7,8-dihydro-8-oxoguanine (8-oxoG). Has AP (apurinic/apyrimidinic) lyase activity and introduces nicks in the DNA strand. Cleaves the DNA backbone by beta-delta elimination to generate a single-strand break at the site of the removed base with both 3'- and 5'-phosphates. In Paraburkholderia phytofirmans (strain DSM 17436 / LMG 22146 / PsJN) (Burkholderia phytofirmans), this protein is Formamidopyrimidine-DNA glycosylase.